A 1554-amino-acid chain; its full sequence is Protein TALPID3 (1554 aa).

The span at 57–68 shows a compositional bias: basic and acidic residues; it reads EHVHSADERRTE. Disordered stretches follow at residues 57 to 84, 227 to 247, 312 to 396, 411 to 466, and 489 to 523; these read EHVH…AGPE, AAEG…SAGR, SIRL…SPER, TADN…TTVQ, and ADAF…APIS. Residues 204–270 are a coiled coil; it reads LMKAQSEMEA…QRLQHLETIQ (67 aa). Composition is skewed to polar residues over residues 312–321, 360–391, 412–447, and 454–466; these read SIRLSATDNP, HWTS…PNNR, ADNS…NGQN, and EPTN…TTVQ. Over residues 513-523 the composition is skewed to pro residues; it reads TAPPPATAPIS. A required for centrosomal localization region spans residues 553 to 639; that stretch reads SMFEDAGLVL…SSERIVDAAV (87 aa). Residues 556-586 are a coiled coil; that stretch reads EDAGLVLRQVRQSKKTLEENLEAILRAKDGE. The segment covering 639–650 has biased composition (basic and acidic residues); sequence VSRREAGQRTRA. Disordered stretches follow at residues 639–687, 1079–1178, 1214–1265, 1354–1374, and 1500–1554; these read VSRR…AVKQ, GTPA…EPGS, QEES…SVTV, QSQQ…SEGQ, and KGED…NDVF. Positions 1080 to 1089 are enriched in polar residues; it reads TPATLVQTQD. 2 stretches are compositionally biased toward pro residues: residues 1099-1115 and 1230-1239; these read TPAP…PSPV and QSPPAPPLPP. Over residues 1240-1265 the composition is skewed to low complexity; that stretch reads VIQKSESSSSSSSSSSESSCSSSVTV. The segment covering 1535–1554 has biased composition (polar residues); that stretch reads ESVSLSSVEGDTDSSANDVF.

It belongs to the TALPID3 family.

The protein resides in the cytoplasm. It is found in the cytoskeleton. Its subcellular location is the cilium basal body. The protein localises to the microtubule organizing center. It localises to the centrosome. The protein resides in the centriole. Required for ciliogenesis and sonic hedgehog/SHH signaling. The protein is Protein TALPID3 (talpid3) of Danio rerio (Zebrafish).